Reading from the N-terminus, the 91-residue chain is Large ribosomal subunit protein bL27 (91 aa).

This sequence belongs to the bacterial ribosomal protein bL27 family.

The sequence is that of Large ribosomal subunit protein bL27 from Chromobacterium violaceum (strain ATCC 12472 / DSM 30191 / JCM 1249 / CCUG 213 / NBRC 12614 / NCIMB 9131 / NCTC 9757 / MK).